Here is a 504-residue protein sequence, read N- to C-terminus: Glycerol kinase (504 aa).

Thr14 serves as a coordination point for ADP. Residues Thr14, Thr15, and Ser16 each contribute to the ATP site. Residue Thr14 participates in sn-glycerol 3-phosphate binding. Residue Arg18 participates in ADP binding. Residues Arg84, Glu85, and Tyr136 each contribute to the sn-glycerol 3-phosphate site. Residues Arg84, Glu85, and Tyr136 each contribute to the glycerol site. A Phosphohistidine; by HPr modification is found at His232. Asp246 lines the sn-glycerol 3-phosphate pocket. Glycerol contacts are provided by Asp246 and Gln247. Residues Thr268 and Gly311 each coordinate ADP. The ATP site is built by Thr268, Gly311, Gln315, and Gly412. ADP is bound by residues Gly412 and Asn416.

Belongs to the FGGY kinase family. As to quaternary structure, homotetramer and homodimer (in equilibrium). The phosphoenolpyruvate-dependent sugar phosphotransferase system (PTS), including enzyme I, and histidine-containing protein (HPr) are required for the phosphorylation, which leads to the activation of the enzyme.

The enzyme catalyses glycerol + ATP = sn-glycerol 3-phosphate + ADP + H(+). It functions in the pathway polyol metabolism; glycerol degradation via glycerol kinase pathway; sn-glycerol 3-phosphate from glycerol: step 1/1. Its activity is regulated as follows. Activated by phosphorylation and inhibited by fructose 1,6-bisphosphate (FBP). In terms of biological role, key enzyme in the regulation of glycerol uptake and metabolism. Catalyzes the phosphorylation of glycerol to yield sn-glycerol 3-phosphate. This chain is Glycerol kinase, found in Streptococcus pyogenes serotype M6 (strain ATCC BAA-946 / MGAS10394).